Consider the following 312-residue polypeptide: Protein-glutamate methylesterase/protein-glutamine glutaminase (312 aa).

The Response regulatory domain maps to 5-122 (RVLSVDDSAL…REGMLAYSEM (118 aa)). Aspartate 56 carries the post-translational modification 4-aspartylphosphate. Positions 152 to 307 (LLSSEKLIAI…QQMLAKISAG (156 aa)) constitute a CheB-type methylesterase domain. Active-site residues include serine 164, histidine 190, and aspartate 249.

It belongs to the CheB family. In terms of processing, phosphorylated by CheA. Phosphorylation of the N-terminal regulatory domain activates the methylesterase activity.

It localises to the cytoplasm. The catalysed reaction is [protein]-L-glutamate 5-O-methyl ester + H2O = L-glutamyl-[protein] + methanol + H(+). It carries out the reaction L-glutaminyl-[protein] + H2O = L-glutamyl-[protein] + NH4(+). Functionally, involved in chemotaxis. Part of a chemotaxis signal transduction system that modulates chemotaxis in response to various stimuli. Catalyzes the demethylation of specific methylglutamate residues introduced into the chemoreceptors (methyl-accepting chemotaxis proteins or MCP) by CheR. Also mediates the irreversible deamidation of specific glutamine residues to glutamic acid. The polypeptide is Protein-glutamate methylesterase/protein-glutamine glutaminase (Shigella boydii serotype 4 (strain Sb227)).